The chain runs to 422 residues: Gamma-glutamyl phosphate reductase (422 aa).

The protein belongs to the gamma-glutamyl phosphate reductase family.

It is found in the cytoplasm. The catalysed reaction is L-glutamate 5-semialdehyde + phosphate + NADP(+) = L-glutamyl 5-phosphate + NADPH + H(+). It functions in the pathway amino-acid biosynthesis; L-proline biosynthesis; L-glutamate 5-semialdehyde from L-glutamate: step 2/2. Its function is as follows. Catalyzes the NADPH-dependent reduction of L-glutamate 5-phosphate into L-glutamate 5-semialdehyde and phosphate. The product spontaneously undergoes cyclization to form 1-pyrroline-5-carboxylate. This Shewanella piezotolerans (strain WP3 / JCM 13877) protein is Gamma-glutamyl phosphate reductase.